A 269-amino-acid chain; its full sequence is MTHLERSRHQQFPFHLVAPSPWPIVVSFALMSLALSLALTMHGYIGHMYLIYLSILTVTLSATLWFRDIIAEATYLGDHTIAVRKGINLGFLLFVVSEILIFAALFWAYFHSAMSPNIELGGVWPPVGIQAVQPTELPLLNTIILLSSGATITYSHHGLVGGNRKNALSGLLITFWLIVIFVTCQYIEYTNATFTITDGVYGSVFYAGTGLHFLHMVMLAAMLGINYWRLRNYHLTATHHVGYETTVLYCHILDIIWLFLYIVFYWWGV.

7 helical membrane passes run 21–41 (PWPIVVSFALMSLALSLALTM), 45–65 (IGHMYLIYLSILTVTLSATLW), 90–110 (GFLLFVVSEILIFAALFWAYF), 138–160 (PLLNTIILLSSGATITYSHHGLV), 167–187 (ALSGLLITFWLIVIFVTCQYI), 205–225 (FYAGTGLHFLHMVMLAAMLGI), and 247–267 (VLYCHILDIIWLFLYIVFYWW).

It belongs to the cytochrome c oxidase subunit 3 family. Component of the cytochrome c oxidase (complex IV, CIV), a multisubunit enzyme composed of a catalytic core of 3 subunits and several supernumerary subunits. The complex exists as a monomer or a dimer and forms supercomplexes (SCs) in the inner mitochondrial membrane with ubiquinol-cytochrome c oxidoreductase (cytochrome b-c1 complex, complex III, CIII).

It is found in the mitochondrion inner membrane. It carries out the reaction 4 Fe(II)-[cytochrome c] + O2 + 8 H(+)(in) = 4 Fe(III)-[cytochrome c] + 2 H2O + 4 H(+)(out). In terms of biological role, component of the cytochrome c oxidase, the last enzyme in the mitochondrial electron transport chain which drives oxidative phosphorylation. The respiratory chain contains 3 multisubunit complexes succinate dehydrogenase (complex II, CII), ubiquinol-cytochrome c oxidoreductase (cytochrome b-c1 complex, complex III, CIII) and cytochrome c oxidase (complex IV, CIV), that cooperate to transfer electrons derived from NADH and succinate to molecular oxygen, creating an electrochemical gradient over the inner membrane that drives transmembrane transport and the ATP synthase. Cytochrome c oxidase is the component of the respiratory chain that catalyzes the reduction of oxygen to water. Electrons originating from reduced cytochrome c in the intermembrane space (IMS) are transferred via the dinuclear copper A center (CU(A)) of subunit 2 and heme A of subunit 1 to the active site in subunit 1, a binuclear center (BNC) formed by heme A3 and copper B (CU(B)). The BNC reduces molecular oxygen to 2 water molecules using 4 electrons from cytochrome c in the IMS and 4 protons from the mitochondrial matrix. This is Cytochrome c oxidase subunit 3 (COX3) from Kluyveromyces lactis (strain ATCC 8585 / CBS 2359 / DSM 70799 / NBRC 1267 / NRRL Y-1140 / WM37) (Yeast).